We begin with the raw amino-acid sequence, 298 residues long: 4-hydroxy-tetrahydrodipicolinate synthase (298 aa).

Residue T51 coordinates pyruvate. The Proton donor/acceptor role is filled by Y139. Catalysis depends on K167, which acts as the Schiff-base intermediate with substrate. I209 provides a ligand contact to pyruvate.

This sequence belongs to the DapA family. As to quaternary structure, homotetramer; dimer of dimers.

It localises to the cytoplasm. It carries out the reaction L-aspartate 4-semialdehyde + pyruvate = (2S,4S)-4-hydroxy-2,3,4,5-tetrahydrodipicolinate + H2O + H(+). Its pathway is amino-acid biosynthesis; L-lysine biosynthesis via DAP pathway; (S)-tetrahydrodipicolinate from L-aspartate: step 3/4. Its function is as follows. Catalyzes the condensation of (S)-aspartate-beta-semialdehyde [(S)-ASA] and pyruvate to 4-hydroxy-tetrahydrodipicolinate (HTPA). This is 4-hydroxy-tetrahydrodipicolinate synthase from Haemophilus influenzae (strain 86-028NP).